The primary structure comprises 380 residues: Chaperone protein DnaJ (380 aa).

Residues 5–70 (DYYEILGVAK…QKRAAYDQYG (66 aa)) enclose the J domain. A CR-type zinc finger spans residues 135 to 213 (GVSKEIRIPT…CHGHGRVEKS (79 aa)). Cysteine 148, cysteine 151, cysteine 165, cysteine 168, cysteine 187, cysteine 190, cysteine 201, and cysteine 204 together coordinate Zn(2+). CXXCXGXG motif repeat units follow at residues 148 to 155 (CGVCHGSG), 165 to 172 (CSTCHGAG), 187 to 194 (CPTCHGRG), and 201 to 208 (CNACHGHG).

It belongs to the DnaJ family. As to quaternary structure, homodimer. Requires Zn(2+) as cofactor.

It is found in the cytoplasm. Functionally, participates actively in the response to hyperosmotic and heat shock by preventing the aggregation of stress-denatured proteins and by disaggregating proteins, also in an autonomous, DnaK-independent fashion. Unfolded proteins bind initially to DnaJ; upon interaction with the DnaJ-bound protein, DnaK hydrolyzes its bound ATP, resulting in the formation of a stable complex. GrpE releases ADP from DnaK; ATP binding to DnaK triggers the release of the substrate protein, thus completing the reaction cycle. Several rounds of ATP-dependent interactions between DnaJ, DnaK and GrpE are required for fully efficient folding. Also involved, together with DnaK and GrpE, in the DNA replication of plasmids through activation of initiation proteins. This chain is Chaperone protein DnaJ, found in Erwinia tasmaniensis (strain DSM 17950 / CFBP 7177 / CIP 109463 / NCPPB 4357 / Et1/99).